The sequence spans 712 residues: Ribosome-releasing factor 2, mitochondrial (712 aa).

The transit peptide at 1 to 28 (MQYSLLSAQLRCSRFLLRQQAPFINRCY) directs the protein to the mitochondrion. Residues 30-309 (DDIRNIGILA…AVNAYLPTPN (280 aa)) form the tr-type G domain. GTP contacts are provided by residues 39-46 (AHIDAGKT), 103-107 (DTPGH), and 157-160 (NKMD).

It belongs to the TRAFAC class translation factor GTPase superfamily. Classic translation factor GTPase family. EF-G/EF-2 subfamily.

The protein localises to the mitochondrion. Mitochondrial GTPase that mediates the disassembly of ribosomes from messenger RNA at the termination of mitochondrial protein biosynthesis. Not involved in the GTP-dependent ribosomal translocation step during translation elongation. This is Ribosome-releasing factor 2, mitochondrial from Drosophila virilis (Fruit fly).